The chain runs to 37 residues: Large ribosomal subunit protein bL36 (37 aa).

The protein belongs to the bacterial ribosomal protein bL36 family.

The sequence is that of Large ribosomal subunit protein bL36 from Photobacterium profundum (strain SS9).